The following is a 272-amino-acid chain: GPN-loop GTPase 3 (272 aa).

Residue 13-18 (GAGKST) coordinates GTP. Residues 70–72 (GPN) carry the Gly-Pro-Asn (GPN)-loop; involved in dimer interface motif. 173–176 (SKLD) contributes to the GTP binding site.

This sequence belongs to the GPN-loop GTPase family. Heterodimers with NPA3/GPN1 or GPN2. Binds to RNA polymerase II (RNAPII).

Functionally, small GTPase required for proper nuclear localization of RNA polymerase II and III (RNAPII and RNAPIII). May act at an RNAP assembly step prior to nuclear import. Promotes sister chromatid separation during anaphase. This chain is GPN-loop GTPase 3, found in Saccharomyces cerevisiae (strain ATCC 204508 / S288c) (Baker's yeast).